The chain runs to 270 residues: Formamidopyrimidine-DNA glycosylase (270 aa).

Residue P2 is the Schiff-base intermediate with DNA of the active site. Catalysis depends on E3, which acts as the Proton donor. K58 (proton donor; for beta-elimination activity) is an active-site residue. DNA-binding residues include H91, R109, and R151. Residues 236 to 270 (MVYNRQEEPCRLCGTPIRQIRQGQRSTYYCPLCQP) form an FPG-type zinc finger. The active-site Proton donor; for delta-elimination activity is the R260.

This sequence belongs to the FPG family. In terms of assembly, monomer. Zn(2+) serves as cofactor.

The catalysed reaction is Hydrolysis of DNA containing ring-opened 7-methylguanine residues, releasing 2,6-diamino-4-hydroxy-5-(N-methyl)formamidopyrimidine.. It carries out the reaction 2'-deoxyribonucleotide-(2'-deoxyribose 5'-phosphate)-2'-deoxyribonucleotide-DNA = a 3'-end 2'-deoxyribonucleotide-(2,3-dehydro-2,3-deoxyribose 5'-phosphate)-DNA + a 5'-end 5'-phospho-2'-deoxyribonucleoside-DNA + H(+). In terms of biological role, involved in base excision repair of DNA damaged by oxidation or by mutagenic agents. Acts as a DNA glycosylase that recognizes and removes damaged bases. Has a preference for oxidized purines, such as 7,8-dihydro-8-oxoguanine (8-oxoG). Has AP (apurinic/apyrimidinic) lyase activity and introduces nicks in the DNA strand. Cleaves the DNA backbone by beta-delta elimination to generate a single-strand break at the site of the removed base with both 3'- and 5'-phosphates. The chain is Formamidopyrimidine-DNA glycosylase from Chromobacterium violaceum (strain ATCC 12472 / DSM 30191 / JCM 1249 / CCUG 213 / NBRC 12614 / NCIMB 9131 / NCTC 9757 / MK).